We begin with the raw amino-acid sequence, 193 residues long: Non-specific lipid transfer protein GPI-anchored 1 (193 aa).

The N-terminal stretch at 1 to 22 is a signal peptide; the sequence is MKGLHLHLVLVTMTIVASIAAA. 4 disulfides stabilise this stretch: Cys-35–Cys-76, Cys-45–Cys-60, Cys-61–Cys-106, and Cys-74–Cys-116. 2 N-linked (GlcNAc...) asparagine glycosylation sites follow: Asn-110 and Asn-135. The tract at residues 138–161 is disordered; that stretch reads TTPVAPAGKSPATPATSTDKGGSA. Residue Asp-165 is the site of GPI-anchor amidated aspartate attachment. A propeptide spans 166–193 (removed in mature form); the sequence is GHAVVALAVALMAVSFVLTLPRHVTLGM.

This sequence belongs to the plant LTP family. O-glycosylated on hydroxyprolines; noncontiguous hydroxylproline residues are glycosylated with arabinogalactan. In terms of tissue distribution, up-regulated in the epidermis of stems and leaves. Expressed in the epidermis, stem cortex, vascular bundles and mesophyll cells in root tips, cotyledons, seedlings, leaves, caulines, flowers, siliques, pollen, and early-developing seeds.

The protein localises to the cell membrane. The protein resides in the secreted. It localises to the cell wall. It is found in the endoplasmic reticulum. Its subcellular location is the golgi apparatus. Functionally, lipid transfer protein that, together with LTPG2, binds to lipids and functions as a component of the cuticular lipid export machinery that performs extensive export of intracellular lipids (e.g. C29 alkane) from epidermal cells to the surface to build the cuticular wax layer and silique walls. Involved in the establishment of resistance to the necrotrophic fungal pathogen Alternaria brassicicola. Contributes to pre-invasive defense against some non-host powdery mildew pathogens by preventing the penetration of the epidermal cell wall by the fungal agents (e.g. Blumeria graminis f. sp. hordei (Bgh)). Maybe involved in seed and ovule maturation and development, probably by regulating the fatty acids homeostasis during suberin and sporopollenin biosynthesis or deposition. This chain is Non-specific lipid transfer protein GPI-anchored 1, found in Arabidopsis thaliana (Mouse-ear cress).